The primary structure comprises 285 residues: Phosphatase YwpJ (285 aa).

Aspartate 7 functions as the Nucleophile in the catalytic mechanism. Position 7 (aspartate 7) interacts with Mg(2+). Leucine 8 contacts phosphate. Aspartate 9 provides a ligand contact to Mg(2+). Phosphate is bound by residues 41–42 (TG) and lysine 214. Positions 237 and 238 each coordinate Mg(2+). Residues asparagine 240 and 282–283 (KH) contribute to the phosphate site.

Belongs to the HAD-like hydrolase superfamily. Cof family. Mg(2+) is required as a cofactor.

Catalyzes the dephosphorylation of phosphorylated 5-6 carbon sugars and monophosphate nucleotides (NMP) in vitro. To a lesser extent, dephosphorylates flavin mononucleotide (FMN) in vitro. The protein is Phosphatase YwpJ (ywpJ) of Bacillus subtilis (strain 168).